We begin with the raw amino-acid sequence, 408 residues long: UPF0761 membrane protein NMCC_0461 (408 aa).

Transmembrane regions (helical) follow at residues 43–63, 100–120, 139–159, 176–196, 210–230, and 248–268; these read LLAL…FPVF, LTAI…RTID, FLVY…GISF, WSGA…LWGL, AFVG…LFTW, and VPFF…GAVL.

This sequence belongs to the UPF0761 family.

Its subcellular location is the cell inner membrane. This is UPF0761 membrane protein NMCC_0461 from Neisseria meningitidis serogroup C (strain 053442).